The following is a 93-amino-acid chain: Integration host factor subunit beta (93 aa).

This sequence belongs to the bacterial histone-like protein family. As to quaternary structure, heterodimer of an alpha and a beta chain.

In terms of biological role, this protein is one of the two subunits of integration host factor, a specific DNA-binding protein that functions in genetic recombination as well as in transcriptional and translational control. This chain is Integration host factor subunit beta, found in Rhodospirillum centenum (strain ATCC 51521 / SW).